We begin with the raw amino-acid sequence, 314 residues long: Small ribosomal subunit biogenesis GTPase RsgA (314 aa).

The disordered stretch occupies residues 1–20 (MKRAPTKQPAKPAARGGERA). The 162-residue stretch at 85–246 (SDQFKSKLFA…LIDSPGFQEF (162 aa)) folds into the CP-type G domain. GTP is bound by residues 134-137 (NKID) and 188-196 (GQSGMGKST). Cys270, Cys275, His277, and Cys283 together coordinate Zn(2+).

Belongs to the TRAFAC class YlqF/YawG GTPase family. RsgA subfamily. In terms of assembly, monomer. Associates with 30S ribosomal subunit, binds 16S rRNA. Zn(2+) serves as cofactor.

It is found in the cytoplasm. Functionally, one of several proteins that assist in the late maturation steps of the functional core of the 30S ribosomal subunit. Helps release RbfA from mature subunits. May play a role in the assembly of ribosomal proteins into the subunit. Circularly permuted GTPase that catalyzes slow GTP hydrolysis, GTPase activity is stimulated by the 30S ribosomal subunit. The chain is Small ribosomal subunit biogenesis GTPase RsgA from Burkholderia pseudomallei (strain K96243).